The sequence spans 202 residues: Imidazoleglycerol-phosphate dehydratase (202 aa).

Belongs to the imidazoleglycerol-phosphate dehydratase family.

Its subcellular location is the cytoplasm. The enzyme catalyses D-erythro-1-(imidazol-4-yl)glycerol 3-phosphate = 3-(imidazol-4-yl)-2-oxopropyl phosphate + H2O. It participates in amino-acid biosynthesis; L-histidine biosynthesis; L-histidine from 5-phospho-alpha-D-ribose 1-diphosphate: step 6/9. The sequence is that of Imidazoleglycerol-phosphate dehydratase from Rhizobium leguminosarum bv. trifolii (strain WSM2304).